Here is a 432-residue protein sequence, read N- to C-terminus: N-acylneuraminate cytidylyltransferase (432 aa).

Substrate is bound by residues Arg-39, Asn-49, Arg-98, Ser-107, Ser-109, and Gln-130. The active site involves Arg-188.

This sequence belongs to the CMP-NeuNAc synthase family. As to quaternary structure, homotetramer; the active enzyme is formed by a dimer of dimers. As to expression, expressed in testis, ovary and liver.

The protein localises to the nucleus. It catalyses the reaction an N-acylneuraminate + CTP = a CMP-N-acyl-beta-neuraminate + diphosphate. It functions in the pathway amino-sugar metabolism; N-acetylneuraminate metabolism. In terms of biological role, catalyzes the activation of N-acetylneuraminic acid (NeuNAc) to cytidine 5'-monophosphate N-acetylneuraminic acid (CMP-NeuNAc), a substrate required for the addition of sialic acid. The polypeptide is N-acylneuraminate cytidylyltransferase (cmas) (Oncorhynchus mykiss (Rainbow trout)).